The chain runs to 105 residues: NADH dehydrogenase [ubiquinone] 1 beta subcomplex subunit 2, mitochondrial (105 aa).

Residues 1-33 (MSDLTRLASFARVGGRLFRSGRARTAGDGGVRH) constitute a mitochondrion transit peptide. The disordered stretch occupies residues 85–105 (PYPDPSQWTDEELGIPPDDED). A compositionally biased stretch (acidic residues) spans 93–105 (TDEELGIPPDDED).

The protein belongs to the complex I NDUFB2 subunit family. As to quaternary structure, complex I is composed of 45 different subunits.

It localises to the mitochondrion inner membrane. In terms of biological role, accessory subunit of the mitochondrial membrane respiratory chain NADH dehydrogenase (Complex I), that is believed not to be involved in catalysis. Complex I functions in the transfer of electrons from NADH to the respiratory chain. The immediate electron acceptor for the enzyme is believed to be ubiquinone. This is NADH dehydrogenase [ubiquinone] 1 beta subcomplex subunit 2, mitochondrial (NDUFB2) from Pan troglodytes (Chimpanzee).